A 745-amino-acid polypeptide reads, in one-letter code: MRLALFALFALMTVATALPAHAEKLTLEAITGSAPLSGPTLTKPQIAPDGSRVTFLRGKDRDRNRLDLWEYDIASGQTRLLVDSSVVLPGEEVLSDEEKARRERQRIAALSGIVDYQWSPDGKALLFPLGGELYFYDLTKSGRDAVRKLTNGGGFATDPKISPKGGFVSFIRDRNLWAIDLASGKEVQLTRDGSDTIGNGVAEFVADEEMDRHTGYWWAPDDAAIAFARIDETPVPVQKRYEVYPDRTEVVEQRYPAAGDHNVRVQLGVIAPKTGARPRWIDLGKDPDIYLARVDWRDPQRLTFQRQSRDQKKIELIETTLTNGTQRTLVTETSTTWVPLHNDLRFLKDGRFLWSSERSGFEHLYVASEDGSTLTALTQGEWVVDSLLAIDEAAGLAYVSGTRDGATEAHVYAVPLSGGEPRRLTQAPGMHAATFARNASVFVDSWSSDTTLPQIELFKADGTKLATLLVNDVSDATHPYAKYRAAHQPTAYGTLTAADGTTPLHYSLIKPAGFDPKKQYPVVVFVYGGPAAQTVTRAWPGRSDSFFNQYLAQQGYVVFTLDNRGTPRRGAAFGGALYGKQGTVEVDDQLRGIEWLKSQAFVDPARIGVYGWSNGGYMTLMLLAKHDEAYACGVAGAPVTDWALYDTHYTERYMDLPKANEAGYREASVFTHVDGIGAGKLLLIHGMADDNVLFTNSTKLMSELQKRGTPFELMTYPGAKHGLRGSDLLHRYRLTEDFFARCLKP.

The N-terminal stretch at 1 to 22 is a signal peptide; it reads MRLALFALFALMTVATALPAHA. Substrate-binding residues include Glu208 and Glu209. Active-site charge relay system residues include Ser613, Asp689, and His721.

Belongs to the peptidase S9B family. In terms of assembly, homodimer.

The protein localises to the cytoplasm. Its subcellular location is the periplasm. It catalyses the reaction Release of an N-terminal dipeptide, Xaa-Yaa-|-Zaa-, from a polypeptide, preferentially when Yaa is Pro, provided Zaa is neither Pro nor hydroxyproline.. With respect to regulation, completely inhibited by the serine protease inhibitor diisopropyl fluorophosphate (DFP) and moderately by N-tosyl-L-phenyl-alanyl chloromethyl ketone (TPCK). Somewhat inhibited by phenylmethanesulfonyl fluoride (PMSF). Activity is not affected by thiol- or metalloprotease inhibitors, such as iodoacetate (IAA), EDTA, N-tosyl-L-lysyl chloromethyl ketone (TLCK), o-phenanthlorine, N-ethylmaleimide (NEM) or dithiothreitol (DTT). Functionally, catalyzes the sequential release of Tyr-Pro, Phe-Pro and Gly-Pro from the N-terminus of peptides and proteins. Is able to cleaves bioactive peptide beta-casomorphin. The protein is Dipeptidyl aminopeptidase 4 of Pseudoxanthomonas mexicana.